Reading from the N-terminus, the 1039-residue chain is Translation initiation factor IF-2 (1039 aa).

2 disordered regions span residues 39 to 347 and 400 to 452; these read TISE…KWQE and ARPP…PEKV. The span at 103–125 shows a compositional bias: polar residues; it reads RNTTSNAPEASVANNQIASSEAN. Positions 157-176 are enriched in low complexity; it reads PQKPAAPEAEPEAQSQAPAK. 2 stretches are compositionally biased toward basic and acidic residues: residues 178–197 and 226–243; these read AVEK…ERQP and PILK…DQAK. Positions 408–423 are enriched in low complexity; the sequence is ARSASAATAAPISSPT. Residues 432 to 451 show a composition bias toward basic and acidic residues; the sequence is NNRDQNRRQETEVKRERPEK. The region spanning 533–706 is the tr-type G domain; the sequence is RRPPVVTIMG…LLVAEVGELS (174 aa). Residues 542 to 549 form a G1 region; that stretch reads GHVDHGKT. Position 542–549 (542–549) interacts with GTP; sequence GHVDHGKT. Residues 567–571 form a G2 region; the sequence is GITQH. Residues 592–595 form a G3 region; the sequence is DTPG. GTP contacts are provided by residues 592–596 and 646–649; these read DTPGH and NKID. Residues 646–649 form a G4 region; that stretch reads NKID. The segment at 682–684 is G5; sequence SAI.

This sequence belongs to the TRAFAC class translation factor GTPase superfamily. Classic translation factor GTPase family. IF-2 subfamily.

Its subcellular location is the cytoplasm. In terms of biological role, one of the essential components for the initiation of protein synthesis. Protects formylmethionyl-tRNA from spontaneous hydrolysis and promotes its binding to the 30S ribosomal subunits. Also involved in the hydrolysis of GTP during the formation of the 70S ribosomal complex. In Nostoc sp. (strain PCC 7120 / SAG 25.82 / UTEX 2576), this protein is Translation initiation factor IF-2.